The following is a 308-amino-acid chain: Mycothiol acetyltransferase (308 aa).

N-acetyltransferase domains are found at residues 8–155 (RDVD…PRLR) and 160–308 (VQVR…RRAR). Residue Glu-39 participates in 1D-myo-inositol 2-(L-cysteinylamino)-2-deoxy-alpha-D-glucopyranoside binding. Residue 84 to 86 (LVV) coordinates acetyl-CoA. Residues Glu-187, Lys-226, and Glu-240 each coordinate 1D-myo-inositol 2-(L-cysteinylamino)-2-deoxy-alpha-D-glucopyranoside. Residues 244–246 (LGI) and 251–257 (QGLGLGR) each bind acetyl-CoA. Tyr-278 contributes to the 1D-myo-inositol 2-(L-cysteinylamino)-2-deoxy-alpha-D-glucopyranoside binding site.

This sequence belongs to the acetyltransferase family. MshD subfamily. Monomer.

The enzyme catalyses 1D-myo-inositol 2-(L-cysteinylamino)-2-deoxy-alpha-D-glucopyranoside + acetyl-CoA = mycothiol + CoA + H(+). Its function is as follows. Catalyzes the transfer of acetyl from acetyl-CoA to desacetylmycothiol (Cys-GlcN-Ins) to form mycothiol. The chain is Mycothiol acetyltransferase from Geodermatophilus obscurus (strain ATCC 25078 / DSM 43160 / JCM 3152 / CCUG 61914 / KCC A-0152 / KCTC 9177 / NBRC 13315 / NRRL B-3577 / G-20).